Here is a 419-residue protein sequence, read N- to C-terminus: Histone acetyltransferase type B subunit 2 (419 aa).

WD repeat units follow at residues 131–171, 177–217, 225–265, 267–307, and 311–351; these read PHDG…VEAL, YHTE…KNIK, AHTD…IIHN, NTKK…NPLY, and GHED…AEQT. Residues 353-357 form an interaction with the histone H4 N-terminus region; the sequence is DEIED. One copy of the WD 6 repeat lies at 368–408; the sequence is GHKTSINDIAVNPNINWLVASAEEDNIVQIWKCSSNIPRIG.

This sequence belongs to the WD repeat RBAP46/RBAP48/MSI1 family. Component of the HAT-B complex composed of at least HAT1 and HAT2. The HAT-B complex binds to histone H4 tail.

Its subcellular location is the cytoplasm. It localises to the nucleus. Its function is as follows. Regulatory subunit of the histone acetylase B (HAT-B) complex. The complex acetylates Lys-12 of histone H4 which is required for telomeric silencing. This is Histone acetyltransferase type B subunit 2 (HAT2) from Candida glabrata (strain ATCC 2001 / BCRC 20586 / JCM 3761 / NBRC 0622 / NRRL Y-65 / CBS 138) (Yeast).